The following is a 320-amino-acid chain: Olfactory receptor 10J1 (320 aa).

Residues 1 to 36 (MLLCFRFGNQSMKRENFTLITDFVFQGFSSFHEQQI) lie on the Extracellular side of the membrane. 2 N-linked (GlcNAc...) asparagine glycosylation sites follow: asparagine 9 and asparagine 16. The helical transmembrane segment at 37–57 (TLFGVFLALYILTLAGNIIIV) threads the bilayer. The Cytoplasmic segment spans residues 58-65 (TIIRMDLH). Residues 66 to 86 (LHTPMYFFLSMLSTSETVYTL) traverse the membrane as a helical segment. Over 87–110 (VILPRMLSSLVGMSQPISLAGCAT) the chain is Extracellular. Cysteine 108 and cysteine 199 are oxidised to a cystine. A helical membrane pass occupies residues 111 to 131 (QMFFFVTFGITNCFLLTAMGY). Over 132 to 150 (DRYVAICNPLRYMVIMNKR) the chain is Cytoplasmic. Residues 151–171 (LRIQLVLGACSIGLIVAITQV) form a helical membrane-spanning segment. Residues 172–207 (TSVFRLPFCARKVPHFFCDIRPVMKLSCIDTTVNEI) lie on the Extracellular side of the membrane. A helical transmembrane segment spans residues 208–227 (LTLIISVLVLVVPMGLVFIS). Residues 228-247 (YVLIISTILKIASVEGRKKA) are Cytoplasmic-facing. Residues 248-268 (FATCASHLTVVIVHYSCASIA) traverse the membrane as a helical segment. At 269–281 (YLKPKSENTREHD) the chain is on the extracellular side. The helical transmembrane segment at 282–302 (QLISVTYTVITPLLNPVVYTL) threads the bilayer. Topologically, residues 303 to 320 (RNKEVKDALCRAVGGKFS) are cytoplasmic.

The protein belongs to the G-protein coupled receptor 1 family.

It is found in the cell membrane. Odorant receptor. The sequence is that of Olfactory receptor 10J1 (OR10J1) from Homo sapiens (Human).